A 191-amino-acid chain; its full sequence is Thiol:disulfide interchange protein TxlA (191 aa).

A helical transmembrane segment spans residues 14-30; it reads ILVIAAALVLTILVVLG. The region spanning 27 to 148 is the Thioredoxin domain; that stretch reads VVLGSRQPSA…LAANLDALVE (122 aa). A disulfide bond links cysteine 69 and cysteine 72. Residues 165–185 show a composition bias toward polar residues; it reads SADLQPSRSSQTDPRSHSGQV. A disordered region spans residues 165-191; that stretch reads SADLQPSRSSQTDPRSHSGQVQDGVLD.

It belongs to the thioredoxin family.

The protein localises to the cell membrane. In terms of biological role, required for disulfide bond formation in some proteins. Acts by transferring its disulfide bond to other proteins and is reduced in the process. This is Thiol:disulfide interchange protein TxlA (txlA) from Synechococcus elongatus (strain ATCC 33912 / PCC 7942 / FACHB-805) (Anacystis nidulans R2).